The following is a 321-amino-acid chain: Probable cell division protein WhiA (321 aa).

Residues 276–309 (NLKELGELLEPPVGKSGVNHRLRKLEKIAEQLHQ) constitute a DNA-binding region (H-T-H motif).

It belongs to the WhiA family.

In terms of biological role, involved in cell division and chromosome segregation. In Natranaerobius thermophilus (strain ATCC BAA-1301 / DSM 18059 / JW/NM-WN-LF), this protein is Probable cell division protein WhiA.